Here is a 391-residue protein sequence, read N- to C-terminus: Recombination and repair protein (391 aa).

60–67 (GPSKSFKS) serves as a coordination point for ATP. The span at 364–374 (KSPESKSKSAA) shows a compositional bias: basic and acidic residues. Positions 364–391 (KSPESKSKSAADLETDLEQLSDMEEFNE) are disordered. Residues 376–391 (LETDLEQLSDMEEFNE) are compositionally biased toward acidic residues.

This sequence belongs to the RecA family.

Its function is as follows. Important in genetic recombination, DNA repair, and replication. Possesses pairing and strand-transfer activity. Interacts with dda and gene 32 proteins. The protein is Recombination and repair protein (UVSX) of Enterobacteria phage T4 (Bacteriophage T4).